A 430-amino-acid chain; its full sequence is Enolase (430 aa).

A sufficient for secretion region spans residues 1-140 (MPYIVDVYAR…YQYLGGFNSK (140 aa)). The residue at position 141 (threonine 141) is a Phosphothreonine. Glutamine 163 contributes to the (2R)-2-phosphoglycerate binding site. Glutamate 205 functions as the Proton donor in the catalytic mechanism. Residue aspartate 242 participates in Mg(2+) binding. Residue serine 259 is modified to Phosphoserine. Position 281 is a phosphotyrosine (tyrosine 281). Mg(2+) contacts are provided by glutamate 287 and aspartate 314. The residue at position 325 (serine 325) is a Phosphoserine. Positions 339, 368, 369, and 390 each coordinate (2R)-2-phosphoglycerate. Residue lysine 339 is the Proton acceptor of the active site.

It belongs to the enolase family. In terms of assembly, homooctamer. Component of the RNA degradosome complex composed of rny, rnjA, rnjB, pnp, pfkA and eno (although rnjA and rnjB's presence is controversial). Requires Mg(2+) as cofactor. Post-translationally, phosphorylated during sporulation.

Its subcellular location is the cytoplasm. It localises to the secreted. The protein resides in the cell surface. The catalysed reaction is (2R)-2-phosphoglycerate = phosphoenolpyruvate + H2O. Its pathway is carbohydrate degradation; glycolysis; pyruvate from D-glyceraldehyde 3-phosphate: step 4/5. Covalent binding to the substrate (probably 2-PG) at Lys-339 of a small fraction of enolase causes inactivation of the enzyme, and possibly serves as a signal for the export of the protein. Citrate acts as a non-competitive inhibitor for both forward and reverse reactions, probably by chelating Mg(2+). In terms of biological role, catalyzes the reversible conversion of 2-phosphoglycerate (2-PG) into phosphoenolpyruvate (PEP). It is essential for the degradation of carbohydrates via glycolysis. Functionally, a component of the RNA degradosome, a multi-enzyme complex involved in RNA processing and messenger RNA degradation. The protein is Enolase of Bacillus subtilis (strain 168).